A 285-amino-acid chain; its full sequence is MDGVLLLNKPKGMTSHDCVAKVRRLLGVKKAGHTGTLDPNVSGVLPICLGKATRIAEFLTGTTKTYEGKVTLGAATTTEDADGDIIAARPVDRPIARAEIEAVFDSLTGEIEQTPPMYSAVKVGGKKLYEYARAGIEVERPTRRVTIYELELLDEREQFFGETVSFRFRVTCSKGTYVRTLAVMIGERLGYPAHMSDLIRTASGPFRLEDCVTFEDVERRAADGTADALLIPIERALFHLPKYEINDKVAEKVKNGALLRLPAFLEKLTGRSCLFRPSGKRWPCT.

D38 functions as the Nucleophile in the catalytic mechanism.

This sequence belongs to the pseudouridine synthase TruB family. Type 1 subfamily.

It catalyses the reaction uridine(55) in tRNA = pseudouridine(55) in tRNA. Responsible for synthesis of pseudouridine from uracil-55 in the psi GC loop of transfer RNAs. This Geobacillus kaustophilus (strain HTA426) protein is tRNA pseudouridine synthase B.